The sequence spans 258 residues: Spindlin-3 (258 aa).

The interval Met1–Val23 is disordered. Tudor-like domain stretches follow at residues Val50 to His99, Val129 to Leu178, and Val210 to Val255. Histone H3K4me3 and H3R8me2a binding stretches follow at residues Glu138 and Asp246–His248.

It belongs to the SPIN/STSY family. Interacts with C11orf84/SPINDOC.

In terms of biological role, exhibits H3K4me3-binding activity. The polypeptide is Spindlin-3 (SPIN3) (Homo sapiens (Human)).